Consider the following 185-residue polypeptide: Elongation factor P (185 aa).

This sequence belongs to the elongation factor P family.

The protein resides in the cytoplasm. Its pathway is protein biosynthesis; polypeptide chain elongation. Involved in peptide bond synthesis. Stimulates efficient translation and peptide-bond synthesis on native or reconstituted 70S ribosomes in vitro. Probably functions indirectly by altering the affinity of the ribosome for aminoacyl-tRNA, thus increasing their reactivity as acceptors for peptidyl transferase. This is Elongation factor P from Microcystis aeruginosa (strain NIES-843 / IAM M-2473).